Consider the following 570-residue polypeptide: MAVTLPRPAYAGMFGPTTGDKVRLADTELFIEIERDFTLYGEEVKFGGGKVIRDGMGQGQASKAEGAADTIITNAVIIDHWGIVKADVGLRDGRIIGIGKAGNPDVQPGIDLIIGPGTEIIAGEGRILTAGGFDSHIHFICPQQIEEALASGMTTMLGGGTGPATGTFATTCTPGPWHIARMIEASDGFAMNLGFAGKGNASRSEGLVEQIEAGACALKLHEDWGTTPAAIDCCLSVADDHDIQVMIHTDTLNESGFVEDTIRAFKGRTIHAFHTEGAGGGHAPDIMKVAGLPNVLPSSTNPTRPFTVNTLDEHLDMLMVCHHLDPSIAEDLAFAESRIRKETIAAEDILHDLGALSMMSSDSQAMGRIGEVITRTWQTADKMKRQRGPLPEDKSNNDNFRVRRYIAKYTINPAITHGVSRHIGSIEPGKLADLVLWTPAFFGVKPDLVIKGGMIAYAMMGDPNASIPTPQPVHGRPMFGSFGGARTGTSLTFTSKTALAHGLAQKLKISRKLVPVENTRGNLRKTSLILNGAMPHIEIDPETYVVKADGMVLTCEPARSLPMAQRYFLF.

The Urease domain maps to 131-570; sequence GGFDSHIHFI…LPMAQRYFLF (440 aa). Residues His-136, His-138, and Lys-219 each coordinate Ni(2+). The residue at position 219 (Lys-219) is an N6-carboxylysine. Residue His-221 participates in substrate binding. The Ni(2+) site is built by His-248 and His-274. His-322 acts as the Proton donor in catalysis. A Ni(2+)-binding site is contributed by Asp-362.

Belongs to the metallo-dependent hydrolases superfamily. Urease alpha subunit family. As to quaternary structure, heterotrimer of UreA (gamma), UreB (beta) and UreC (alpha) subunits. Three heterotrimers associate to form the active enzyme. Ni cation serves as cofactor. Post-translationally, carboxylation allows a single lysine to coordinate two nickel ions.

The protein resides in the cytoplasm. It carries out the reaction urea + 2 H2O + H(+) = hydrogencarbonate + 2 NH4(+). Its pathway is nitrogen metabolism; urea degradation; CO(2) and NH(3) from urea (urease route): step 1/1. The sequence is that of Urease subunit alpha from Beijerinckia indica subsp. indica (strain ATCC 9039 / DSM 1715 / NCIMB 8712).